The chain runs to 484 residues: Putative amidase AmiA2 (484 aa).

Active-site charge relay system residues include Lys-93 and Ser-167. Catalysis depends on Ser-191, which acts as the Acyl-ester intermediate.

Belongs to the amidase family.

The catalysed reaction is a monocarboxylic acid amide + H2O = a monocarboxylate + NH4(+). This chain is Putative amidase AmiA2 (amiA2), found in Mycobacterium bovis (strain ATCC BAA-935 / AF2122/97).